Reading from the N-terminus, the 313-residue chain is DNA-directed RNA polymerase subunit alpha (313 aa).

Positions 1–226 are alpha N-terminal domain (alpha-NTD); the sequence is MLEIEKPKIE…EHMRLFLGLT (226 aa). The tract at residues 242–313 is alpha C-terminal domain (alpha-CTD); the sequence is TRDRLMDMSI…LGLSLRSSEE (72 aa).

Belongs to the RNA polymerase alpha chain family. As to quaternary structure, homodimer. The RNAP catalytic core consists of 2 alpha, 1 beta, 1 beta' and 1 omega subunit. When a sigma factor is associated with the core the holoenzyme is formed, which can initiate transcription.

It catalyses the reaction RNA(n) + a ribonucleoside 5'-triphosphate = RNA(n+1) + diphosphate. Functionally, DNA-dependent RNA polymerase catalyzes the transcription of DNA into RNA using the four ribonucleoside triphosphates as substrates. This is DNA-directed RNA polymerase subunit alpha from Moorella thermoacetica (strain ATCC 39073 / JCM 9320).